Here is a 317-residue protein sequence, read N- to C-terminus: Transaldolase (317 aa).

Lysine 125 acts as the Schiff-base intermediate with substrate in catalysis.

This sequence belongs to the transaldolase family. Type 1 subfamily. In terms of assembly, homodimer.

The protein resides in the cytoplasm. The enzyme catalyses D-sedoheptulose 7-phosphate + D-glyceraldehyde 3-phosphate = D-erythrose 4-phosphate + beta-D-fructose 6-phosphate. Its pathway is carbohydrate degradation; pentose phosphate pathway; D-glyceraldehyde 3-phosphate and beta-D-fructose 6-phosphate from D-ribose 5-phosphate and D-xylulose 5-phosphate (non-oxidative stage): step 2/3. Functionally, transaldolase is important for the balance of metabolites in the pentose-phosphate pathway. In Delftia acidovorans (strain DSM 14801 / SPH-1), this protein is Transaldolase.